Consider the following 631-residue polypeptide: Chaperone protein DnaK (631 aa).

A Phosphothreonine; by autocatalysis modification is found at threonine 198. The tract at residues 602–631 is disordered; the sequence is EAAGGAQQAGKDDVVDAEFTEVDDDKKKSA.

It belongs to the heat shock protein 70 family.

In terms of biological role, acts as a chaperone. The protein is Chaperone protein DnaK of Rhodopseudomonas palustris (strain ATCC BAA-98 / CGA009).